A 98-amino-acid polypeptide reads, in one-letter code: NADH-ubiquinone oxidoreductase chain 4L (98 aa).

The next 3 membrane-spanning stretches (helical) occupy residues 1-21 (MIPTYMNIMLAFTISLLGMLT), 27-47 (VASLLCLEGMMMSLFIMATLI), and 61-81 (IILLVFAACEAAVGLALLISI).

It belongs to the complex I subunit 4L family. Core subunit of respiratory chain NADH dehydrogenase (Complex I) which is composed of 45 different subunits.

The protein resides in the mitochondrion inner membrane. It catalyses the reaction a ubiquinone + NADH + 5 H(+)(in) = a ubiquinol + NAD(+) + 4 H(+)(out). Functionally, core subunit of the mitochondrial membrane respiratory chain NADH dehydrogenase (Complex I) which catalyzes electron transfer from NADH through the respiratory chain, using ubiquinone as an electron acceptor. Part of the enzyme membrane arm which is embedded in the lipid bilayer and involved in proton translocation. This Macaca hecki (Heck's macaque) protein is NADH-ubiquinone oxidoreductase chain 4L (MT-ND4L).